Consider the following 935-residue polypeptide: Progesterone receptor (935 aa).

The tract at residues 1–49 is disordered; the sequence is MTELKAKGXRAPHVAGSPSSPKVXSPLPCRQAAXPFPGSQTSDTLPEVS. The interval 1 to 164 is AF3; mediates transcriptional activation; sequence MTELKAKGXR…SATQRVLSRL (164 aa). Positions 1 to 568 are modulating, Pro-Rich; that stretch reads MTELKAKGXR…YSFESLPQKI (568 aa). Over residues 17 to 28 the composition is skewed to low complexity; that stretch reads SPSSPKVXSPLP. Phosphoserine is present on Ser-20. Positions 55–59 match the LXXL motif 1 motif; that stretch reads LDGLL. The tract at residues 61-255 is disordered; sequence PRICQGQDPP…GAAAGGGAAA (195 aa). Ser-81 is subject to Phosphoserine. The LXXL motif 2 signature appears at 115 to 119; it reads LDTLW. Residues Ser-130 and Ser-162 each carry the phosphoserine modification. Positions 165 to 305 are mediates transcriptional transrepression; sequence MSRSGGKAGD…LATTVTDFIH (141 aa). Residues 183–187 carry the Nuclear localization signal motif; sequence KVLPR. Ser-190 is modified (phosphoserine). Positions 191–203 are enriched in polar residues; that stretch reads PSRQLLLPTTGSP. Position 213 is a phosphoserine (Ser-213). Over residues 220-231 the composition is skewed to acidic residues; the sequence is EVEEEDGSESED. Over residues 232–246 the composition is skewed to low complexity; that stretch reads SAGPLLKGKPRALGG. Phosphoserine; by MAPK1 is present on Ser-294. Positions 331–365 are disordered; that stretch reads GGAGAASAFAPPRSSPSASSTPVPGGDFPDCAYAP. Residues 335–356 are compositionally biased toward low complexity; that stretch reads AASAFAPPRSSPSASSTPVPGG. Ser-345 is subject to Phosphoserine; by MAPK. Residue Lys-388 forms a Glycyl lysine isopeptide (Lys-Gly) (interchain with G-Cter in SUMO); alternate linkage. Lys-388 participates in a covalent cross-link: Glycyl lysine isopeptide (Lys-Gly) (interchain with G-Cter in ubiquitin); alternate. Residue Ser-400 is modified to Phosphoserine; by CDK2. The disordered stretch occupies residues 415 to 452; sequence PDFPLGPPPPLPPRAPPSRPGEAAVTAAPASASVSSAS. The span at 418-433 shows a compositional bias: pro residues; the sequence is PLGPPPPLPPRAPPSR. Over residues 434–452 the composition is skewed to low complexity; the sequence is PGEAAVTAAPASASVSSAS. Residues 456–548 are AF1; mediates transcriptional activation; sequence STLECILYKA…VYPPYLNYLR (93 aa). Lys-533 participates in a covalent cross-link: Glycyl lysine isopeptide (Lys-Gly) (interchain with G-Cter in SUMO). 2 consecutive NR C4-type zinc fingers follow at residues 569–589 and 605–629; these read CLIC…CGSC and CAGR…LRKC. A DNA-binding region (nuclear receptor) is located at residues 569–641; it reads CLICGDEASG…AGMVLGGRKF (73 aa). At Ser-678 the chain carries Phosphoserine. The NR LBD domain maps to 681–915; sequence QDIQLIPPLI…EFPEMMSEVI (235 aa). Residues 689 to 935 form an AF2; mediates transcriptional activation region; that stretch reads LINLLLSIEP…MVKPLLFHKK (247 aa).

The protein belongs to the nuclear hormone receptor family. As to quaternary structure, interacts with SMARD1 and UNC45A. Interacts with CUEDC2; the interaction promotes ubiquitination, decreases sumoylation, and represses transcriptional activity. Interacts with PIAS3; the interaction promotes sumoylation of PR in a hormone-dependent manner, inhibits DNA-binding, and alters nuclear export. Interacts with SP1; the interaction requires ligand-induced phosphorylation on Ser-345 by ERK1/2-MAPK. Interacts with PRMT2. Interacts with NCOA2 and NCOA1. Interacts with KLF9. Interacts with GTF2B. Post-translationally, phosphorylated on multiple serine sites. Several of these sites are hormone-dependent. Phosphorylation on Ser-294 is highly hormone-dependent and modulates ubiquitination and sumoylation on Lys-388. Phosphorylation on Ser-345 also requires induction by hormone. Basal phosphorylation on Ser-81, Ser-162, Ser-190 and Ser-400 is increased in response to progesterone and can be phosphorylated in vitro by the CDK2-A1 complex. Increased levels of phosphorylation on Ser-400 also in the presence of EGF, heregulin, IGF, PMA and FBS. Phosphorylation at this site by CDK2 is ligand-independent, and increases nuclear translocation and transcriptional activity. Phosphorylation at Ser-162 and Ser-294, but not at Ser-190, is impaired during the G(2)/M phase of the cell cycle. Phosphorylation on Ser-345 by ERK1/2 MAPK is required for interaction with SP1. In terms of processing, sumoylation is hormone-dependent and represses transcriptional activity. Sumoylation on all three sites is enhanced by PIAS3. Desumoylated by SENP1. Sumoylation on Lys-388, the main site of sumoylation, is repressed by ubiquitination on the same site, and modulated by phosphorylation at Ser-294. Ubiquitination is hormone-dependent and represses sumoylation on the same site. Promoted by MAPK-mediated phosphorylation on Ser-294. Post-translationally, palmitoylated by ZDHHC7 and ZDHHC21. Palmitoylation is required for plasma membrane targeting and for rapid intracellular signaling via ERK and AKT kinases and cAMP generation.

Its subcellular location is the nucleus. The protein localises to the cytoplasm. Functionally, the steroid hormones and their receptors are involved in the regulation of eukaryotic gene expression and affect cellular proliferation and differentiation in target tissues. Transcriptional activator of several progesteron-dependent promoters in a variety of cell types. Involved in activation of SRC-dependent MAPK signaling on hormone stimulation. The chain is Progesterone receptor (PGR) from Ateles paniscus (Black spider monkey).